Consider the following 418-residue polypeptide: Tyrosine--tRNA ligase (418 aa).

Y34 is an L-tyrosine binding site. The short motif at 39-48 is the 'HIGH' region element; that stretch reads PTADSLHLGH. Positions 169 and 173 each coordinate L-tyrosine. The 'KMSKS' region signature appears at 229 to 233; the sequence is KFGKS. ATP is bound at residue K232. Residues 352–418 form the S4 RNA-binding domain; it reads LNLVDMLVTA…GKKKYAVLTY (67 aa).

Belongs to the class-I aminoacyl-tRNA synthetase family. TyrS type 1 subfamily. As to quaternary structure, homodimer.

It is found in the cytoplasm. The enzyme catalyses tRNA(Tyr) + L-tyrosine + ATP = L-tyrosyl-tRNA(Tyr) + AMP + diphosphate + H(+). In terms of biological role, catalyzes the attachment of tyrosine to tRNA(Tyr) in a two-step reaction: tyrosine is first activated by ATP to form Tyr-AMP and then transferred to the acceptor end of tRNA(Tyr). The polypeptide is Tyrosine--tRNA ligase (Streptococcus pyogenes serotype M18 (strain MGAS8232)).